We begin with the raw amino-acid sequence, 311 residues long: Transcriptional regulatory protein MoaR1 (311 aa).

A DNA-binding region (ompR/PhoB-type) is located at residues 15–117 (LNATTAGAVQ…SEPPGYRLLI (103 aa)).

Belongs to the AfsR/DnrI/RedD regulatory family.

In terms of biological role, acts as a positive transcriptional regulator of the molybdopterin biosynthesis moa1 locus, promoting the expression of the moaA1B1C1D1 genes. Binds directly to the moaA1 promoter. The chain is Transcriptional regulatory protein MoaR1 (moaR1) from Mycobacterium tuberculosis (strain ATCC 25618 / H37Rv).